The sequence spans 443 residues: Oxygen-dependent coproporphyrinogen-III oxidase, mitochondrial (443 aa).

The transit peptide at 1-98 (MALRLGRLGS…EMVPKSSGAR (98 aa)) directs the protein to the mitochondrion. The tract at residues 89 to 112 (EMVPKSSGARSPSPGRREEDGDEL) is disordered. Ser-101 bears the Phosphoserine mark. Positions 103-112 (GRREEDGDEL) are enriched in basic and acidic residues. An important for dimerization region spans residues 182-191 (VLQDGRVFEK). Ser-233 is a binding site for coproporphyrinogen III. The active-site Proton donor is His-247. A coproporphyrinogen III-binding site is contributed by 249 to 251 (NYR). The segment at 381–417 (YVEFNLLYDRGTKFGLFTPGSRIESILMSLPLTARWE) is important for dimerization. Residue Lys-393 is modified to N6-acetyllysine; alternate. At Lys-393 the chain carries N6-succinyllysine; alternate. Residue 400-402 (GSR) participates in coproporphyrinogen III binding.

It belongs to the aerobic coproporphyrinogen-III oxidase family. Homodimer. As to expression, expressed in erythroid cells. Expressed in liver.

Its subcellular location is the mitochondrion intermembrane space. The enzyme catalyses coproporphyrinogen III + O2 + 2 H(+) = protoporphyrinogen IX + 2 CO2 + 2 H2O. The protein operates within porphyrin-containing compound metabolism; protoporphyrin-IX biosynthesis; protoporphyrinogen-IX from coproporphyrinogen-III (O2 route): step 1/1. Functionally, involved in the heme biosynthesis. Catalyzes the aerobic oxidative decarboxylation of propionate groups of rings A and B of coproporphyrinogen-III to yield the vinyl groups in protoporphyrinogen-IX. The chain is Oxygen-dependent coproporphyrinogen-III oxidase, mitochondrial (Cpox) from Mus musculus (Mouse).